We begin with the raw amino-acid sequence, 416 residues long: Prostate tumor-overexpressed gene 1 protein (416 aa).

Positions 1-53 (MVRPRRAPYRSGAGGPLGGRGRPPRPLVVRAVRSRSWPASPRGPQPPRIRARS) are disordered. Residues 12–21 (GAGGPLGGRG) are compositionally biased toward gly residues. Residues 27-36 (LVVRAVRSRS) are compositionally biased toward low complexity. A Phosphoserine modification is found at Ser-53. An interaction with FLOT1 region spans residues 184-416 (NGFAGCMLFP…QEQQQRGMGG (233 aa)).

Belongs to the Mediator complex subunit 25 family. PTOV1 subfamily. In terms of assembly, may interact with CREBBP. Interacts with FLOT1. Ubiquitinated by the CRL2(KLHDC2) complex, which recognizes the diglycine (Gly-Gly) at the C-terminus, leading to its degradation. Ubiquitinated by the CRL2(APPBP2) complex, which recognizes the Arg-Xaa-Xaa-Gly sequence at the C-terminus, leading to its degradation. As to expression, expressed in brain, heart, kidney, liver, placenta, skeletal muscle and small intestine.

It is found in the cytoplasm. It localises to the nucleus. The protein localises to the cell membrane. Its subcellular location is the perinuclear region. May activate transcription. Required for nuclear translocation of FLOT1. Promotes cell proliferation. The sequence is that of Prostate tumor-overexpressed gene 1 protein (PTOV1) from Homo sapiens (Human).